Reading from the N-terminus, the 399-residue chain is C-type lectin domain family 4 member M (399 aa).

Residues 1-49 are Cytoplasmic-facing; sequence MSDSKEQRVQPLGLLEEDPTTSGIRLFPRDFQFQQTHGHKSSTGCLGHG. Positions 14 to 15 match the Endocytosis signal motif; that stretch reads LL. A helical; Signal-anchor for type II membrane protein membrane pass occupies residues 50 to 70; sequence PLVLQLLSFTLLAGVLVAILV. The Extracellular segment spans residues 71–399; sequence QVYKVPSSLS…KKPTACFRDE (329 aa). N-linked (GlcNAc...) asparagine glycosylation occurs at asparagine 92. Repeat copies occupy residues 108–130, 131–153, 154–176, 177–199, 200–222, 223–245, and 246–268. Residues 108–269 are 7 X approximate tandem repeats; the sequence is KLQEIYQELI…AFERLCCRCP (162 aa). 4 cysteine pairs are disulfide-bonded: cysteine 265-cysteine 395, cysteine 268-cysteine 279, cysteine 296-cysteine 389, and cysteine 368-cysteine 381. A C-type lectin domain is found at 274 to 390; sequence FFQGNCYFIS…CNVDNYWICK (117 aa). Ca(2+) contacts are provided by glutamate 359, asparagine 361, serine 363, glutamate 366, asparagine 377, and aspartate 378. A glycan (N-linked (GlcNAc...) asparagine) is linked at asparagine 361.

In terms of assembly, homotetramer.

The protein resides in the membrane. Functionally, probable pathogen-recognition receptor involved in peripheral immune surveillance in liver. May mediate the endocytosis of pathogens which are subsequently degraded in lysosomal compartments. Probably recognizes in a calcium-dependent manner high mannose N-linked oligosaccharides in a variety of pathogen antigens. Is a receptor for ICAM3, probably by binding to mannose-like carbohydrates. The chain is C-type lectin domain family 4 member M (CLEC4M) from Hylobates lar (Lar gibbon).